The chain runs to 1050 residues: Valine--tRNA ligase (1050 aa).

The segment covering 37–57 (EKKAAASDKPVKEAKAKKEQT) has biased composition (basic and acidic residues). Positions 37–72 (EKKAAASDKPVKEAKAKKEQTVEAAEPVDQTPTGQR) are disordered. Positions 127 to 137 (PNVTGNLHVGH) match the 'HIGH' region motif. Positions 642 to 646 (KMSKS) match the 'KMSKS' region motif. Lys645 is an ATP binding site.

The protein belongs to the class-I aminoacyl-tRNA synthetase family.

The enzyme catalyses tRNA(Val) + L-valine + ATP = L-valyl-tRNA(Val) + AMP + diphosphate. The sequence is that of Valine--tRNA ligase from Caenorhabditis elegans.